We begin with the raw amino-acid sequence, 252 residues long: Chitooligosaccharide deacetylase (252 aa).

Mg(2+) is bound by residues His-61 and His-125.

This sequence belongs to the YdjC deacetylase family. ChbG subfamily. As to quaternary structure, homodimer. Mg(2+) serves as cofactor.

The protein resides in the cytoplasm. The enzyme catalyses N,N'-diacetylchitobiose + H2O = N-acetyl-beta-D-glucosaminyl-(1-&gt;4)-D-glucosamine + acetate. The catalysed reaction is diacetylchitobiose-6'-phosphate + H2O = N'-monoacetylchitobiose-6'-phosphate + acetate. It participates in glycan degradation; chitin degradation. Functionally, involved in the degradation of chitin. ChbG is essential for growth on the acetylated chitooligosaccharides chitobiose and chitotriose but is dispensable for growth on cellobiose and chitosan dimer, the deacetylated form of chitobiose. Deacetylation of chitobiose-6-P and chitotriose-6-P is necessary for both the activation of the chb promoter by the regulatory protein ChbR and the hydrolysis of phosphorylated beta-glucosides by the phospho-beta-glucosidase ChbF. Catalyzes the removal of only one acetyl group from chitobiose-6-P to yield monoacetylchitobiose-6-P, the inducer of ChbR and the substrate of ChbF. The chain is Chitooligosaccharide deacetylase from Salmonella paratyphi C (strain RKS4594).